The following is a 360-amino-acid chain: Phosphoserine aminotransferase (360 aa).

Arg41 contacts L-glutamate. 4 residues coordinate pyridoxal 5'-phosphate: Trp101, Thr152, Asp172, and Gln195. At Lys196 the chain carries N6-(pyridoxal phosphate)lysine. 237 to 238 (NT) lines the pyridoxal 5'-phosphate pocket.

It belongs to the class-V pyridoxal-phosphate-dependent aminotransferase family. SerC subfamily. Homodimer. Requires pyridoxal 5'-phosphate as cofactor.

The protein resides in the cytoplasm. It carries out the reaction O-phospho-L-serine + 2-oxoglutarate = 3-phosphooxypyruvate + L-glutamate. The catalysed reaction is 4-(phosphooxy)-L-threonine + 2-oxoglutarate = (R)-3-hydroxy-2-oxo-4-phosphooxybutanoate + L-glutamate. It participates in amino-acid biosynthesis; L-serine biosynthesis; L-serine from 3-phospho-D-glycerate: step 2/3. It functions in the pathway cofactor biosynthesis; pyridoxine 5'-phosphate biosynthesis; pyridoxine 5'-phosphate from D-erythrose 4-phosphate: step 3/5. Catalyzes the reversible conversion of 3-phosphohydroxypyruvate to phosphoserine and of 3-hydroxy-2-oxo-4-phosphonooxybutanoate to phosphohydroxythreonine. This Burkholderia orbicola (strain MC0-3) protein is Phosphoserine aminotransferase.